The primary structure comprises 222 residues: Cytidylate kinase (222 aa).

An ATP-binding site is contributed by 10-18; sequence GPSASGKGT.

Belongs to the cytidylate kinase family. Type 1 subfamily.

It localises to the cytoplasm. The catalysed reaction is CMP + ATP = CDP + ADP. It catalyses the reaction dCMP + ATP = dCDP + ADP. This chain is Cytidylate kinase, found in Chromobacterium violaceum (strain ATCC 12472 / DSM 30191 / JCM 1249 / CCUG 213 / NBRC 12614 / NCIMB 9131 / NCTC 9757 / MK).